The primary structure comprises 321 residues: tRNA(Ile)-lysidine synthase (321 aa).

An ATP-binding site is contributed by 20–25 (SGGADS).

It belongs to the tRNA(Ile)-lysidine synthase family.

The protein localises to the cytoplasm. The enzyme catalyses cytidine(34) in tRNA(Ile2) + L-lysine + ATP = lysidine(34) in tRNA(Ile2) + AMP + diphosphate + H(+). Functionally, ligates lysine onto the cytidine present at position 34 of the AUA codon-specific tRNA(Ile) that contains the anticodon CAU, in an ATP-dependent manner. Cytidine is converted to lysidine, thus changing the amino acid specificity of the tRNA from methionine to isoleucine. The polypeptide is tRNA(Ile)-lysidine synthase (Bordetella pertussis (strain Tohama I / ATCC BAA-589 / NCTC 13251)).